We begin with the raw amino-acid sequence, 216 residues long: Transmembrane emp24 domain-containing protein eca (216 aa).

An N-terminal signal peptide occupies residues 1 to 20 (MRNQFICVALLLCALNSACG). Topologically, residues 21 to 183 (LYFHISETER…RHTSESTNSR (163 aa)) are lumenal. Residues 30–126 (RKCFIEEVPD…QLRVHLDIQV (97 aa)) enclose the GOLD domain. Residues 134–164 (ANVAQKEKLTELQLRIRQLLDQVDQITKEQN) adopt a coiled-coil conformation. Residues 184–203 (VLWWSLAQTVVLVCMGFWQM) form a helical membrane-spanning segment. At 204 to 216 (RHLKSFFEAKKLV) the chain is on the cytoplasmic side. Positions 213–216 (KKLV) match the Prevents secretion from ER motif.

Belongs to the EMP24/GP25L family.

Its subcellular location is the endoplasmic reticulum membrane. Eca and bai are essential, though not redundant, for dorsoventral patterning of the embryo. Specifically required during early embryogenesis for the activity of maternal tkv, while the zygotic tkv is not affected. Involved in Golgi organization. This is Transmembrane emp24 domain-containing protein eca from Drosophila willistoni (Fruit fly).